The sequence spans 634 residues: UPF0313 protein PG_0934 (634 aa).

One can recognise a Radical SAM core domain in the interval A302–K582. [4Fe-4S] cluster contacts are provided by C316, C320, and C323. The interval D607–S634 is disordered. Over residues R625–S634 the composition is skewed to basic residues.

This sequence belongs to the UPF0313 family. Requires [4Fe-4S] cluster as cofactor.

The sequence is that of UPF0313 protein PG_0934 from Porphyromonas gingivalis (strain ATCC BAA-308 / W83).